The chain runs to 430 residues: Tektin-2 (430 aa).

2 coiled-coil regions span residues 80–162 (KCLT…FEQL) and 225–382 (NKDR…CKAN).

It belongs to the tektin family. Microtubule inner protein component of sperm flagellar doublet microtubules. May interact with CCDC172. Post-translationally, tyrosine phosphorylated. In terms of processing, ubiquitinated, leading to its degradation. Deubiquitinated by USP16, promoting its stability. In terms of tissue distribution, expressed at high levels in testis, trachea and fetal lung, and at lower levels in ovary, pituitary, adult lung, fetal brain and fetal kidney.

The protein localises to the cytoplasm. Its subcellular location is the cytoskeleton. It localises to the cilium axoneme. It is found in the flagellum axoneme. The protein resides in the microtubule organizing center. In terms of biological role, microtubule inner protein (MIP) part of the dynein-decorated doublet microtubules (DMTs) in cilia and flagellar axoneme. Plays a key role in the assembly or attachment of the inner dynein arm to microtubules in sperm flagella and tracheal cilia. Forms filamentous polymers in the walls of ciliary and flagellar microtubules. The polypeptide is Tektin-2 (Homo sapiens (Human)).